A 93-amino-acid chain; its full sequence is Small ribosomal subunit protein bS18 (93 aa).

Belongs to the bacterial ribosomal protein bS18 family. As to quaternary structure, part of the 30S ribosomal subunit. Forms a tight heterodimer with protein bS6.

In terms of biological role, binds as a heterodimer with protein bS6 to the central domain of the 16S rRNA, where it helps stabilize the platform of the 30S subunit. This is Small ribosomal subunit protein bS18 from Verminephrobacter eiseniae (strain EF01-2).